A 519-amino-acid chain; its full sequence is ATP synthase subunit beta (519 aa).

Over residues 1 to 26 the composition is skewed to low complexity; it reads MAKAATPKRAPARAAAIPAAATPAAK. The segment at 1–40 is disordered; that stretch reads MAKAATPKRAPARAAAIPAAATPAAKPAKRASTRSAAARS. 197–204 provides a ligand contact to ATP; the sequence is GGAGVGKT.

The protein belongs to the ATPase alpha/beta chains family. In terms of assembly, F-type ATPases have 2 components, CF(1) - the catalytic core - and CF(0) - the membrane proton channel. CF(1) has five subunits: alpha(3), beta(3), gamma(1), delta(1), epsilon(1). CF(0) has three main subunits: a(1), b(2) and c(9-12). The alpha and beta chains form an alternating ring which encloses part of the gamma chain. CF(1) is attached to CF(0) by a central stalk formed by the gamma and epsilon chains, while a peripheral stalk is formed by the delta and b chains.

The protein resides in the cell inner membrane. It carries out the reaction ATP + H2O + 4 H(+)(in) = ADP + phosphate + 5 H(+)(out). Produces ATP from ADP in the presence of a proton gradient across the membrane. The catalytic sites are hosted primarily by the beta subunits. This is ATP synthase subunit beta from Chelativorans sp. (strain BNC1).